Reading from the N-terminus, the 781-residue chain is Phenylalanine--tRNA ligase beta subunit (781 aa).

The tRNA-binding domain maps to 39 to 147 (APPFNDVVVA…DDAPVGEDLR (109 aa)). One can recognise a B5 domain in the interval 398–473 (PRREPIELRL…RLFGYDRIPA (76 aa)). Positions 451, 457, 460, and 461 each coordinate Mg(2+). Residues 687 to 780 (SRFPQVRRDL…AARRCSATLR (94 aa)) form the FDX-ACB domain.

Belongs to the phenylalanyl-tRNA synthetase beta subunit family. Type 1 subfamily. As to quaternary structure, tetramer of two alpha and two beta subunits. Mg(2+) is required as a cofactor.

The protein resides in the cytoplasm. It carries out the reaction tRNA(Phe) + L-phenylalanine + ATP = L-phenylalanyl-tRNA(Phe) + AMP + diphosphate + H(+). This is Phenylalanine--tRNA ligase beta subunit from Thiobacillus denitrificans (strain ATCC 25259 / T1).